Reading from the N-terminus, the 1038-residue chain is Pro-apoptotic serine protease nma111 (1038 aa).

The tract at residues 1 to 47 is disordered; that stretch reads MDLNGDSNAKRKRSSISAAAERPAKHLRPENSSLTPGDTTPANGTVY. Residues 30-43 show a composition bias toward polar residues; that stretch reads ENSSLTPGDTTPAN. Residues 82-275 are serine protease; the sequence is VVSIHFCQTC…DRPLRALNCI (194 aa). Active-site charge relay system residues include histidine 120, aspartate 151, and serine 233. PDZ domains are found at residues 289–374 and 877–958; these read QWIL…LLVQ and VFCG…VTFD.

It belongs to the peptidase S1C family.

Its subcellular location is the nucleus. Nuclear serine protease which mediates apoptosis. This chain is Pro-apoptotic serine protease nma111 (nma111), found in Aspergillus terreus (strain NIH 2624 / FGSC A1156).